The primary structure comprises 385 residues: Putative F-box protein At1g49610 (385 aa).

One can recognise an F-box domain in the interval 25-73 (VDSISSLPDVILQENLSLIPTKFAIRTSVLSKRWRHVWSETPSLDFDDC).

In Arabidopsis thaliana (Mouse-ear cress), this protein is Putative F-box protein At1g49610.